Reading from the N-terminus, the 486-residue chain is 23S rRNA (uracil(1939)-C(5))-methyltransferase RlmD (486 aa).

The TRAM domain occupies 10–71 (TVKAPEYLPD…SSFEKAVVMA (62 aa)). Residues cysteine 84, cysteine 94, cysteine 97, and cysteine 176 each contribute to the [4Fe-4S] cluster site. Residues glutamine 285, phenylalanine 314, asparagine 319, glutamate 335, asparagine 370, and aspartate 391 each contribute to the S-adenosyl-L-methionine site. The Nucleophile role is filled by cysteine 442.

Belongs to the class I-like SAM-binding methyltransferase superfamily. RNA M5U methyltransferase family. RlmD subfamily.

The enzyme catalyses uridine(1939) in 23S rRNA + S-adenosyl-L-methionine = 5-methyluridine(1939) in 23S rRNA + S-adenosyl-L-homocysteine + H(+). Its function is as follows. Catalyzes the formation of 5-methyl-uridine at position 1939 (m5U1939) in 23S rRNA. This is 23S rRNA (uracil(1939)-C(5))-methyltransferase RlmD from Polaromonas sp. (strain JS666 / ATCC BAA-500).